The primary structure comprises 303 residues: Putative S-adenosyl-L-methionine-dependent methyltransferase SCO6443 (303 aa).

S-adenosyl-L-methionine-binding positions include aspartate 130 and 159–160 (DL).

It belongs to the UPF0677 family.

Its function is as follows. Exhibits S-adenosyl-L-methionine-dependent methyltransferase activity. The protein is Putative S-adenosyl-L-methionine-dependent methyltransferase SCO6443 of Streptomyces coelicolor (strain ATCC BAA-471 / A3(2) / M145).